Here is a 439-residue protein sequence, read N- to C-terminus: Probable anion transporter 7 (439 aa).

The first 28 residues, 1-28 (MTALTRMKFPKRYVIVLLTFICTNVCYI), serve as a signal peptide directing secretion. The next 11 membrane-spanning stretches (helical) occupy residues 53-73 (MILSMFYYGYVLSQIPGGWAA), 81-101 (VLLLSFVLWSLICGLIPLDPK), 104-124 (VILVLSRLFVGVAQGFIFPAI), 143-163 (LTTSGMYLGAAGGMLFFPSLV), 167-187 (GAQSVFFVEAVLGVAWSVIWL), 232-252 (IIFSLPVWAIVVNNFTFHYAL), 280-300 (LPYFNMFIFSNIGGVVADHLI), 312-332 (KLLNTIGFVVSAVALMALPLF), 338-358 (TVLCSSISLGFLALGRAGFAV), 367-387 (FAGIVMGVSNTAGTLAGIVGV), and 412-432 (TVFFVPGYLCIFSSIIFLIFS).

The protein belongs to the major facilitator superfamily. Sodium/anion cotransporter (TC 2.A.1.14) family.

The protein resides in the cell membrane. Its function is as follows. Probable anion transporter. The protein is Probable anion transporter 7 (PHT4;7) of Oryza sativa subsp. japonica (Rice).